A 447-amino-acid polypeptide reads, in one-letter code: Glyceraldehyde-3-phosphate dehydrogenase GAPB, chloroplastic (447 aa).

A chloroplast-targeting transit peptide spans 1-80 (MATHAALAVS…STPVRGETVA (80 aa)). NADP(+) is bound by residues 91–92 (RI), Asp-115, and Arg-160. D-glyceraldehyde 3-phosphate contacts are provided by residues 234–236 (SCT), Thr-265, Arg-280, 293–294 (TG), and Arg-316. The active-site Nucleophile is the Cys-235. NADP(+) is bound at residue Asn-399.

It belongs to the glyceraldehyde-3-phosphate dehydrogenase family. As to quaternary structure, tetramer of either four A chains (GAPDH 2) or two A and two B chains (GAPDH 1). As to expression, expressed in leaves and stems.

The protein localises to the plastid. It localises to the chloroplast membrane. Its subcellular location is the chloroplast stroma. It catalyses the reaction D-glyceraldehyde 3-phosphate + phosphate + NADP(+) = (2R)-3-phospho-glyceroyl phosphate + NADPH + H(+). The protein operates within carbohydrate biosynthesis; Calvin cycle. In terms of biological role, involved in the photosynthetic reductive pentose phosphate pathway (Calvin-Benson cycle). Catalyzes the reduction of 1,3-diphosphoglycerate by NADPH. This Arabidopsis thaliana (Mouse-ear cress) protein is Glyceraldehyde-3-phosphate dehydrogenase GAPB, chloroplastic (GAPB).